The primary structure comprises 156 residues: Small ribosomal subunit protein uS7 (156 aa).

The protein belongs to the universal ribosomal protein uS7 family. As to quaternary structure, part of the 30S ribosomal subunit. Contacts proteins S9 and S11.

One of the primary rRNA binding proteins, it binds directly to 16S rRNA where it nucleates assembly of the head domain of the 30S subunit. Is located at the subunit interface close to the decoding center, probably blocks exit of the E-site tRNA. This is Small ribosomal subunit protein uS7 from Shewanella woodyi (strain ATCC 51908 / MS32).